Here is a 299-residue protein sequence, read N- to C-terminus: Streptogrisin-B (299 aa).

A signal peptide spans 1–38 (MRIKRTSNRSNAARRVRTTAVLAGLAAVAALAVPTANA). A propeptide spanning residues 39–114 (ETPRTFSANQ…ERTPGKFTKL (76 aa)) is cleaved from the precursor. Cys-128 and Cys-148 are joined by a disulfide. Residues His-147, Asp-177, and Ser-255 each act as charge relay system in the active site. Cys-249 and Cys-276 are oxidised to a cystine.

It belongs to the peptidase S1 family. Monomer.

The catalysed reaction is Hydrolysis of proteins with trypsin-like specificity.. Has a primary specificity for large aliphatic or aromatic amino acids. The sequence is that of Streptogrisin-B (sprB) from Streptomyces griseus.